The following is a 206-amino-acid chain: Guanylate kinase (206 aa).

A Guanylate kinase-like domain is found at 5-184; it reads GMLIVLSGPS…AAERIKAIIR (180 aa). 12–19 is a binding site for ATP; sequence GPSGVGKG.

This sequence belongs to the guanylate kinase family.

The protein resides in the cytoplasm. It carries out the reaction GMP + ATP = GDP + ADP. Essential for recycling GMP and indirectly, cGMP. The polypeptide is Guanylate kinase (Lactiplantibacillus plantarum (strain ATCC BAA-793 / NCIMB 8826 / WCFS1) (Lactobacillus plantarum)).